The chain runs to 88 residues: Protein K3 (88 aa).

The S1 motif domain maps to L8–K82. Binding to host EIF2AK2/PKR stretches follow at residues S43–E53 and K74–V79.

It belongs to the poxviridae K3 protein family. Interacts with host EIF2AK2/PKR kinase.

Viral mimic of EIF2S1/eIF-2alpha that acts as a pseudosubstrate for EIF2AK2/PKR kinase. Inhibits therefore EIF2S1/eIF-2alpha phosphorylation by host EIF2AK2/PKR kinase and prevents protein synthesis shutoff. Determinant of host species specificity. This chain is Protein K3, found in Vaccinia virus (strain Western Reserve) (VACV).